A 206-amino-acid chain; its full sequence is dITP/XTP pyrophosphatase (206 aa).

Residue 10-15 (SGNAGK) participates in substrate binding. 2 residues coordinate Mg(2+): E40 and D69. Catalysis depends on D69, which acts as the Proton acceptor. Substrate-binding positions include S70, 148-151 (FGYD), K171, and 176-177 (HR).

It belongs to the HAM1 NTPase family. Homodimer. Mg(2+) is required as a cofactor.

The catalysed reaction is XTP + H2O = XMP + diphosphate + H(+). It catalyses the reaction dITP + H2O = dIMP + diphosphate + H(+). It carries out the reaction ITP + H2O = IMP + diphosphate + H(+). Its function is as follows. Pyrophosphatase that catalyzes the hydrolysis of nucleoside triphosphates to their monophosphate derivatives, with a high preference for the non-canonical purine nucleotides XTP (xanthosine triphosphate), dITP (deoxyinosine triphosphate) and ITP. Seems to function as a house-cleaning enzyme that removes non-canonical purine nucleotides from the nucleotide pool, thus preventing their incorporation into DNA/RNA and avoiding chromosomal lesions. This Synechococcus sp. (strain CC9311) protein is dITP/XTP pyrophosphatase.